The following is a 177-amino-acid chain: MNSRIHVIHGDITTVAVDAIVNAANPSLMGGGGVDGAIHRAAGPELLEACMTVRRQQGECPPGHAVITAAGRLPAKAVIHTVGPIWRGGEHNEAQLLHDAYLNSLNLALANGYQSIAFPAISTGVYGYPRAAAAEIAVNTISEFITRRASPEQIYFVCYDEETTRLYQRLLTQQGDQ.

In terms of domain architecture, Macro spans Met1 to Gly175. Residues Asp11–Ile12, Asn25, Gly33–Asp35, and Ser122–Tyr126 each bind substrate. Residue Asp35 is the Proton acceptor of the active site.

It belongs to the MacroD-type family. YmdB subfamily. Homodimer. Interacts with RNase III.

It catalyses the reaction 3''-O-acetyl-ADP-D-ribose + H2O = ADP-D-ribose + acetate + H(+). The enzyme catalyses 2''-O-acetyl-ADP-D-ribose + H2O = ADP-D-ribose + acetate + H(+). In terms of biological role, deacetylates O-acetyl-ADP ribose to yield ADP-ribose and free acetate. Down-regulates ribonuclease 3 (RNase III) activity. Acts by interacting directly with the region of the ribonuclease that is required for dimerization/activation. The sequence is that of O-acetyl-ADP-ribose deacetylase from Citrobacter rodentium (strain ICC168) (Citrobacter freundii biotype 4280).